The primary structure comprises 158 residues: Urease subunit beta (158 aa).

A disordered region spans residues 113–158; that stretch reads EDDWRRSSAAGDAPQELPQVEAAERGRKLDEATDVGTEDTPEEGQN. A compositionally biased stretch (basic and acidic residues) spans 134-143; the sequence is AAERGRKLDE. The span at 144-158 shows a compositional bias: acidic residues; the sequence is ATDVGTEDTPEEGQN.

It belongs to the urease beta subunit family. As to quaternary structure, heterotrimer of UreA (gamma), UreB (beta) and UreC (alpha) subunits. Three heterotrimers associate to form the active enzyme.

Its subcellular location is the cytoplasm. It catalyses the reaction urea + 2 H2O + H(+) = hydrogencarbonate + 2 NH4(+). It participates in nitrogen metabolism; urea degradation; CO(2) and NH(3) from urea (urease route): step 1/1. This Corynebacterium glutamicum (strain R) protein is Urease subunit beta.